A 137-amino-acid chain; its full sequence is Probable glycine cleavage system H protein 1 (137 aa).

The 83-residue stretch at 31 to 113 (VAVIGITDYA…YGEGWIFKLK (83 aa)) folds into the Lipoyl-binding domain. Position 72 is an N6-lipoyllysine (Lys-72).

This sequence belongs to the GcvH family. As to quaternary structure, the glycine cleavage system is composed of four proteins: P, T, L and H. The cofactor is (R)-lipoate.

Functionally, the glycine cleavage system catalyzes the degradation of glycine. The H protein shuttles the methylamine group of glycine from the P protein to the T protein. In Saccharolobus solfataricus (strain ATCC 35092 / DSM 1617 / JCM 11322 / P2) (Sulfolobus solfataricus), this protein is Probable glycine cleavage system H protein 1.